The following is a 280-amino-acid chain: Phosphatidylglycerol--prolipoprotein diacylglyceryl transferase (280 aa).

4 helical membrane passes run 30-50, 71-91, 106-126, and 132-152; these read WYGL…RRIV, FLLW…ILFY, IWNG…AMII, and AIPI…GLFF. Arg-154 is a binding site for a 1,2-diacyl-sn-glycero-3-phospho-(1'-sn-glycerol). A run of 3 helical transmembrane segments spans residues 188–208, 217–237, and 251–271; these read QLYE…WFVY, GLVT…VEFF, and WLTM…WAIA.

Belongs to the Lgt family.

Its subcellular location is the cell inner membrane. The catalysed reaction is L-cysteinyl-[prolipoprotein] + a 1,2-diacyl-sn-glycero-3-phospho-(1'-sn-glycerol) = an S-1,2-diacyl-sn-glyceryl-L-cysteinyl-[prolipoprotein] + sn-glycerol 1-phosphate + H(+). It participates in protein modification; lipoprotein biosynthesis (diacylglyceryl transfer). Functionally, catalyzes the transfer of the diacylglyceryl group from phosphatidylglycerol to the sulfhydryl group of the N-terminal cysteine of a prolipoprotein, the first step in the formation of mature lipoproteins. This is Phosphatidylglycerol--prolipoprotein diacylglyceryl transferase from Sinorhizobium medicae (strain WSM419) (Ensifer medicae).